The sequence spans 282 residues: Bifunctional protein FolD (282 aa).

NADP(+) is bound by residues 165–167 and Ile231; that span reads GAS.

The protein belongs to the tetrahydrofolate dehydrogenase/cyclohydrolase family. In terms of assembly, homodimer.

It carries out the reaction (6R)-5,10-methylene-5,6,7,8-tetrahydrofolate + NADP(+) = (6R)-5,10-methenyltetrahydrofolate + NADPH. The catalysed reaction is (6R)-5,10-methenyltetrahydrofolate + H2O = (6R)-10-formyltetrahydrofolate + H(+). The protein operates within one-carbon metabolism; tetrahydrofolate interconversion. Functionally, catalyzes the oxidation of 5,10-methylenetetrahydrofolate to 5,10-methenyltetrahydrofolate and then the hydrolysis of 5,10-methenyltetrahydrofolate to 10-formyltetrahydrofolate. The polypeptide is Bifunctional protein FolD (Francisella philomiragia subsp. philomiragia (strain ATCC 25017 / CCUG 19701 / FSC 153 / O#319-036)).